We begin with the raw amino-acid sequence, 872 residues long: MFVNLHTNSYYNFLNSTLSPQKLVDLAVQDQQVAVCLTDPNLFGATEFFLACQKAHIKPLIGLSVTVRHYEQNVNLLVIAQTNRGYQNLMCLALVKDQPDLQLEPFLDGNVVIICTQTELRLNTANPVYLAHGLSGRYPKIAVTQKPVKCQNTNKDLTLLLTLKQISQINSEHFQPLEWKLSRSLNEIQLDPPLLQQLRHQPFLSQKAAQQIFSEEELGNLQKLVEQSQWDLTKLKASSLQVSHNDAQMLSEQCQLALTEFLKLNPQLNKQLYEERLAKELEIINSLHFASYFLVVSDLVQFAHNNDILIGPGRGSAVGSLVAFLLKITQIDPVANNLIFERFISRHRQGLPDIDIDIMETKRDLVIDYVMQKYGREQCAQIVTFQKFKTRSALRDVGKVFNHIEGAEDLLGKLPKDKSLLELDVNGVTDPVLQLSLKSFRLLWEVAREIINFPRQPSIHASGVVIVTEPLITTIPLMVGNNNNYVTQVSMDWLEWYNLNKFDLLGLINLTMIHEVVQAVKPKEVSVQQFLQQIPLDDEATFTNLTNQATLGVFQLESFGMKKVLKQIKPHNLHDLAIVLALYRPGPQDNINTFIANRNLGFDTSDIDPRILPILKETYGVLIFQEQVINIAKTVANYSLETADSFRRAISKKNLQVIQDNMRSFYEGALANNFSLKAATTIFNYIQRFAGYGFNLSHALGYALLSYWTAWLKTHYFEQFNLWWLNHEQGKKEKQKQLLNEFISSGYEICPPLINKAKSDFSVQDKKLYLGFKLINGIGDKQAHALEHVQEVLKQNPNLSLIATVNLCLSKTVGGLELKDITLLQQAGCFNCFNYTVDFNLAKSFWVQSNHELFPKIPLDQPPVINWKSFGF.

The protein belongs to the DNA polymerase type-C family. DnaE subfamily. DNA polymerase III contains a core (composed of alpha, epsilon and theta chains) that associates with a tau subunit. This core dimerizes to form the PolIII' complex. PolIII' associates with the gamma complex (composed of gamma, delta, delta', psi and chi chains) and with the beta chain to form the complete DNA polymerase III complex.

Its subcellular location is the cytoplasm. It catalyses the reaction DNA(n) + a 2'-deoxyribonucleoside 5'-triphosphate = DNA(n+1) + diphosphate. Its function is as follows. DNA polymerase III is a complex, multichain enzyme responsible for most of the replicative synthesis in bacteria. This DNA polymerase also exhibits 3' to 5' exonuclease activity. The alpha chain is the DNA polymerase. This is DNA polymerase III subunit alpha (dnaE) from Mycoplasma pneumoniae (strain ATCC 29342 / M129 / Subtype 1) (Mycoplasmoides pneumoniae).